Here is a 238-residue protein sequence, read N- to C-terminus: Ribonuclease PH (238 aa).

Phosphate is bound by residues arginine 86 and 124-126 (GTR).

The protein belongs to the RNase PH family. In terms of assembly, homohexameric ring arranged as a trimer of dimers.

The enzyme catalyses tRNA(n+1) + phosphate = tRNA(n) + a ribonucleoside 5'-diphosphate. Its function is as follows. Phosphorolytic 3'-5' exoribonuclease that plays an important role in tRNA 3'-end maturation. Removes nucleotide residues following the 3'-CCA terminus of tRNAs; can also add nucleotides to the ends of RNA molecules by using nucleoside diphosphates as substrates, but this may not be physiologically important. Probably plays a role in initiation of 16S rRNA degradation (leading to ribosome degradation) during starvation. This is Ribonuclease PH from Serratia proteamaculans (strain 568).